Here is a 1604-residue protein sequence, read N- to C-terminus: Putative surface cell antigen sca2 (1604 aa).

Residues 1–33 form the signal peptide; sequence MSLQNSHSKKYVLTFFMSTCLLTSSFLSTSARA. Disordered stretches follow at residues 324–354, 554–603, and 1183–1240; these read TTKP…RTKP, NVNN…SNPN, and QQEN…KSLL. A compositionally biased stretch (low complexity) spans 554–564; sequence NVNNNSNKGQN. A compositionally biased stretch (pro residues) spans 568-587; it reads ILPPTPPLNGSMPPSPPPPL. 2 stretches are compositionally biased toward basic and acidic residues: residues 1193 to 1213 and 1227 to 1240; these read SSTK…KSDS and SKND…KSLL. An Autotransporter domain is found at 1325–1604; the sequence is EASINRGVWI…QGLIKLKVNL (280 aa).

It is found in the cell outer membrane. This chain is Putative surface cell antigen sca2 (sca2), found in Rickettsia felis (strain ATCC VR-1525 / URRWXCal2) (Rickettsia azadi).